The sequence spans 33 residues: Cytochrome b6-f complex subunit 7 (33 aa).

The chain crosses the membrane as a helical span at residues 5–25 (IFNTAVITFTLVLVGLGAGYL).

Belongs to the PetM family. The 4 large subunits of the cytochrome b6-f complex are cytochrome b6, subunit IV (17 kDa polypeptide, PetD), cytochrome f and the Rieske protein, while the 4 small subunits are PetG, PetL, PetM and PetN. The complex functions as a dimer.

The protein localises to the cellular thylakoid membrane. In terms of biological role, component of the cytochrome b6-f complex, which mediates electron transfer between photosystem II (PSII) and photosystem I (PSI), cyclic electron flow around PSI, and state transitions. This is Cytochrome b6-f complex subunit 7 from Thermosynechococcus vestitus (strain NIES-2133 / IAM M-273 / BP-1).